A 644-amino-acid chain; its full sequence is Exoribonuclease 2 (644 aa).

The RNB domain maps to 189–516; sequence RKDLTALDFV…NHRLLKAVIK (328 aa). Positions 561-643 constitute an S1 motif domain; sequence DTRFAAEIVD…ETRSIIARPV (83 aa).

Belongs to the RNR ribonuclease family. RNase II subfamily.

It localises to the cytoplasm. The enzyme catalyses Exonucleolytic cleavage in the 3'- to 5'-direction to yield nucleoside 5'-phosphates.. In terms of biological role, involved in mRNA degradation. Hydrolyzes single-stranded polyribonucleotides processively in the 3' to 5' direction. In Escherichia coli O157:H7, this protein is Exoribonuclease 2.